A 184-amino-acid chain; its full sequence is Rubrerythrin-2 (184 aa).

Residues 2-146 form the Ferritin-like diiron domain; that stretch reads SVKNAMTADF…DAQDSAKENK (145 aa). Fe(3+) contacts are provided by Glu19, Glu52, Glu94, Glu97, Glu128, His131, Cys156, Cys159, Cys171, and Cys174. The 34-residue stretch at 151–184 folds into the Rubredoxin-like domain; that stretch reads GKVYICPVCGFTTLDENIEQCPICGVKKDKFQAF.

The cofactor is Fe(3+).

It catalyses the reaction H2O2 + NADH + H(+) = NAD(+) + 2 H2O. With respect to regulation, rubredoxin (Rd) increases the NADH consumption rate by serving as an intermediary electron-transfer shuttle between NROR and Rbr2. Functionally, functions as the terminal component of an NADH peroxidase (NADH:H(2)O(2) oxidoreductase) when using NADH:rubredoxin oxidoreductase (NROR) as the electron transport intermediary from NADH to Rbr2. The sequence is that of Rubrerythrin-2 (rbr2) from Clostridium acetobutylicum (strain ATCC 824 / DSM 792 / JCM 1419 / IAM 19013 / LMG 5710 / NBRC 13948 / NRRL B-527 / VKM B-1787 / 2291 / W).